Here is a 513-residue protein sequence, read N- to C-terminus: MKALPVLLIILDGFGCRDERANNAIAQANKPNWDRLWKHHPHTLIHASESEVGLPKGQMGNSEVGHLNIGAGRVVYQEFTRIDRAIESGYFYTNPALLNAVHLARDNGKTLHVLGLLSDGGVHSHELHFHALLDLAAREGLSKVCLHVFLDGRDTPPKSAELYLRRLTDKIAQAGVGHVASMIGRYFAMDRDRRWQRVKSAYDLLTQGAAEFSAGSAQAGLEAAYARGETDEFVKATAIVPADGRPVTMEDGDSVIFLNFRSDRARQLSRPFIEPDFSEFERERTPRLATYCTLTGYSDDFDVSVAFPPERIKNGLGEYVANLGLRQLRIAETEKYPHVTFFFNGGEEVSFPGEDRILVSSPDVATYDLKPEMSAFEVTEKLLAAIGSKQYDLIVCNYANPDMVGHTGNLEAAIKAIETVDTCLGRVVEAQLARGGEVLITADHGNAELMLDAETGQAHTAHTMNLVPVIFVGRRHASLAETGALEDVSPTLLRMMGLPQPPEMSGESLLAFE.

The Mn(2+) site is built by D12 and S62. The active-site Phosphoserine intermediate is the S62. Residues H123, 153 to 154 (RD), R185, R191, 261 to 264 (RSDR), and K335 each bind substrate. Mn(2+) contacts are provided by D402, H406, D443, H444, and H462.

The protein belongs to the BPG-independent phosphoglycerate mutase family. In terms of assembly, monomer. Mn(2+) serves as cofactor.

It catalyses the reaction (2R)-2-phosphoglycerate = (2R)-3-phosphoglycerate. It participates in carbohydrate degradation; glycolysis; pyruvate from D-glyceraldehyde 3-phosphate: step 3/5. Functionally, catalyzes the interconversion of 2-phosphoglycerate and 3-phosphoglycerate. The sequence is that of 2,3-bisphosphoglycerate-independent phosphoglycerate mutase from Thiobacillus denitrificans (strain ATCC 25259 / T1).